We begin with the raw amino-acid sequence, 120 residues long: Ribonuclease P protein component (120 aa).

It belongs to the RnpA family. As to quaternary structure, consists of a catalytic RNA component (M1 or rnpB) and a protein subunit.

It catalyses the reaction Endonucleolytic cleavage of RNA, removing 5'-extranucleotides from tRNA precursor.. In terms of biological role, RNaseP catalyzes the removal of the 5'-leader sequence from pre-tRNA to produce the mature 5'-terminus. It can also cleave other RNA substrates such as 4.5S RNA. The protein component plays an auxiliary but essential role in vivo by binding to the 5'-leader sequence and broadening the substrate specificity of the ribozyme. This Microcystis aeruginosa (strain NIES-843 / IAM M-2473) protein is Ribonuclease P protein component.